A 524-amino-acid chain; its full sequence is Pentatricopeptide repeat-containing protein At1g02150 (524 aa).

7 PPR repeats span residues 168–202 (DRRV…GYAL), 203–237 (HPLP…DIRL), 238–268 (DIYS…MKSD), 274–304 (NWTT…VEAR), 309–339 (NRIP…YKSV), 344–378 (PNLG…KSSY), and 379–413 (DPRI…GGKP).

Belongs to the PPR family. P subfamily.

This Arabidopsis thaliana (Mouse-ear cress) protein is Pentatricopeptide repeat-containing protein At1g02150.